The following is a 198-amino-acid chain: Sorcin (198 aa).

4 EF-hand domains span residues 45 to 64 (QDGQ…SGIA), 70 to 98 (FNLE…FKEL), 100 to 135 (AVLN…MGFR), and 151 to 169 (SGKI…LRAL). Positions 83, 85, 87, 89, 94, 113, 115, 117, 119, and 124 each coordinate Ca(2+). Serine 178 is modified (phosphoserine).

In terms of assembly, homodimer. Interacts with GCA, RYR2 and ANXA7. Detected in cardiac myocytes.

It is found in the cytoplasm. It localises to the sarcoplasmic reticulum membrane. Its function is as follows. Calcium-binding protein that modulates excitation-contraction coupling in the heart. Contributes to calcium homeostasis in the heart sarcoplasmic reticulum. Modulates the activity of RYR2 calcium channels. The protein is Sorcin (Sri) of Mus musculus (Mouse).